The primary structure comprises 221 residues: MAAPVCVNIQMLLEAAEYLERREREAEHGYASMLPYNSKERDGLKRKSKSKKSSSSRSTHNEMEKNRRAHLRLCLEKLKMLVPLGPESNRHTTLSLLMRAKLHIKKLEDCDKRSVHQIEQLQREQRHLTRQLEKFGVERTRMDSIGSAMSSERSDSDREEIDVDVESTDYLTAELDWSSSSSSVSDLDERESMQSICSDEGYSSSGLKSIGLQNNPKSIAL.

Residues 21-49 (RREREAEHGYASMLPYNSKERDGLKRKSK) carry the Nuclear localization signal motif. 2 disordered regions span residues 29–67 (GYASMLPYNSKERDGLKRKSKSKKSSSSRSTHNEMEKNR) and 178–221 (SSSS…SIAL). The bHLH domain maps to 55 to 107 (SSRSTHNEMEKNRRAHLRLCLEKLKMLVPLGPESNRHTTLSLLMRAKLHIKKL). Over residues 193 to 221 (MQSICSDEGYSSSGLKSIGLQNNPKSIAL) the composition is skewed to polar residues.

Heterodimer with MAX; the interaction is required for DNA-binding. DNA binding requires dimerization with another bHLH protein; does not form homodimers, and does not bind to DNA in the absence of MAX in vitro. In terms of tissue distribution, expressed primarily in cells that have undergone terminal differentiation including notochord, floor plate and cement gland.

The protein resides in the nucleus. Component of a transcriptional repressor complex together with MAX. In complex with MAX binds to the core DNA sequence 5'-CAC[GA]TG-3'. Antagonizes MYC transcriptional activity by competing with MYC for MAX binding. Binds to the TERT promoter and represses telomerase expression, possibly by interfering with MYC binding. This chain is Max dimerization protein 1 (mxd1), found in Xenopus laevis (African clawed frog).